Consider the following 134-residue polypeptide: Protein X (134 aa).

The tract at residues 25–48 is disordered; the sequence is SRGRPVSGPFGPLPSPSSSAVPAD. Residues 29–47 are compositionally biased toward low complexity; that stretch reads PVSGPFGPLPSPSSSAVPA. Positions 68–117 are mitochondrial targeting sequence; it reads PCALRLTSARRMETTVNAHQVLPKVLHKRTLGLSAMSTTDLEAYFKDCLF.

It belongs to the orthohepadnavirus protein X family. In terms of assembly, may form homodimer. May interact with host CEBPA, CFLAR, CREB1, DDB1, E4F1, HBXIP, HSPD1/HSP60, NFKBIA, POLR2E and SMAD4. Interacts with host SMC5-SMC6 complex and induces its degradation. Interacts with host TRPC4AP; leading to prevent ubiquitination of TRPC4AP. Interacts with host PLSCR1; this interaction promotes ubiquitination and degradation of HBx and impairs HBx-mediated cell proliferation. A fraction may be phosphorylated in insect cells and HepG2 cells, a human hepatoblastoma cell line. Phosphorylated in vitro by host protein kinase C or mitogen-activated protein kinase. N-acetylated in insect cells.

The protein resides in the host cytoplasm. Its subcellular location is the host nucleus. It is found in the host mitochondrion. In terms of biological role, multifunctional protein that plays a role in silencing host antiviral defenses and promoting viral transcription. Does not seem to be essential for HBV infection. May be directly involved in development of cirrhosis and liver cancer (hepatocellular carcinoma). Most of cytosolic activities involve modulation of cytosolic calcium. The effect on apoptosis is controversial depending on the cell types in which the studies have been conducted. May induce apoptosis by localizing in mitochondria and causing loss of mitochondrial membrane potential. May also modulate apoptosis by binding host CFLAR, a key regulator of the death-inducing signaling complex (DISC). Promotes viral transcription by using the host E3 ubiquitin ligase DDB1 to target the SMC5-SMC6 complex to proteasomal degradation. This host complex would otherwise bind to viral episomal DNA, and prevents its transcription. Moderately stimulates transcription of many different viral and cellular transcription elements. Promoters and enhancers stimulated by HBx contain DNA binding sites for NF-kappa-B, AP-1, AP-2, c-EBP, ATF/CREB, or the calcium-activated factor NF-AT. This is Protein X from Homo sapiens (Human).